The following is a 157-amino-acid chain: SsrA-binding protein (157 aa).

This sequence belongs to the SmpB family.

It is found in the cytoplasm. In terms of biological role, required for rescue of stalled ribosomes mediated by trans-translation. Binds to transfer-messenger RNA (tmRNA), required for stable association of tmRNA with ribosomes. tmRNA and SmpB together mimic tRNA shape, replacing the anticodon stem-loop with SmpB. tmRNA is encoded by the ssrA gene; the 2 termini fold to resemble tRNA(Ala) and it encodes a 'tag peptide', a short internal open reading frame. During trans-translation Ala-aminoacylated tmRNA acts like a tRNA, entering the A-site of stalled ribosomes, displacing the stalled mRNA. The ribosome then switches to translate the ORF on the tmRNA; the nascent peptide is terminated with the 'tag peptide' encoded by the tmRNA and targeted for degradation. The ribosome is freed to recommence translation, which seems to be the essential function of trans-translation. The polypeptide is SsrA-binding protein (Clostridium novyi (strain NT)).